Reading from the N-terminus, the 154-residue chain is 6,7-dimethyl-8-ribityllumazine synthase (154 aa).

Residues phenylalanine 22, 56 to 58 (AFE), and 80 to 82 (AVI) each bind 5-amino-6-(D-ribitylamino)uracil. Residue 85–86 (AT) coordinates (2S)-2-hydroxy-3-oxobutyl phosphate. Histidine 88 functions as the Proton donor in the catalytic mechanism. Phenylalanine 113 provides a ligand contact to 5-amino-6-(D-ribitylamino)uracil. Residue arginine 127 coordinates (2S)-2-hydroxy-3-oxobutyl phosphate.

The protein belongs to the DMRL synthase family.

It catalyses the reaction (2S)-2-hydroxy-3-oxobutyl phosphate + 5-amino-6-(D-ribitylamino)uracil = 6,7-dimethyl-8-(1-D-ribityl)lumazine + phosphate + 2 H2O + H(+). Its pathway is cofactor biosynthesis; riboflavin biosynthesis; riboflavin from 2-hydroxy-3-oxobutyl phosphate and 5-amino-6-(D-ribitylamino)uracil: step 1/2. Catalyzes the formation of 6,7-dimethyl-8-ribityllumazine by condensation of 5-amino-6-(D-ribitylamino)uracil with 3,4-dihydroxy-2-butanone 4-phosphate. This is the penultimate step in the biosynthesis of riboflavin. This is 6,7-dimethyl-8-ribityllumazine synthase from Agathobacter rectalis (strain ATCC 33656 / DSM 3377 / JCM 17463 / KCTC 5835 / VPI 0990) (Eubacterium rectale).